Here is a 304-residue protein sequence, read N- to C-terminus: uncharacterized protein (304 aa).

Belongs to the histone deacetylase family.

In terms of biological role, putative deacetylase. This is an uncharacterized protein from Synechocystis sp. (strain ATCC 27184 / PCC 6803 / Kazusa).